A 517-amino-acid polypeptide reads, in one-letter code: RNA-binding region-containing protein 3 (517 aa).

The interval Met1–Asp26 is disordered. Residue Ser21 is modified to Phosphoserine. An RRM 1 domain is found at Arg27 to Glu102. Disordered stretches follow at residues Val106–Glu130 and Met213–Arg254. Ser108 is modified (phosphoserine). A compositionally biased stretch (basic and acidic residues) spans Ser115–Glu130. Residues Ala217–Pro230 show a composition bias toward pro residues. Positions Pro231–Glu252 are enriched in acidic residues. The RRM 2 domain occupies Cys420–Ser503.

As to quaternary structure, component of the U11/U12 snRNPs that are part of the U12-type spliceosome. Found in a complex with m(7)G-capped U12 snRNA. Interacts with PDCD7.

Its subcellular location is the nucleus. Its function is as follows. Participates in pre-mRNA U12-dependent splicing, performed by the minor spliceosome which removes U12-type introns. U12-type introns comprises less than 1% of all non-coding sequences. Binds to the 3'-stem-loop of m(7)G-capped U12 snRNA. In Pongo abelii (Sumatran orangutan), this protein is RNA-binding region-containing protein 3 (RNPC3).